Consider the following 200-residue polypeptide: Serine/threonine-protein kinase mos (200 aa).

The 199-residue stretch at 2–200 (LCLLQPLGSG…ELLKGERVTA (199 aa)) folds into the Protein kinase domain. ATP is bound by residues 8–16 (LGSGGFGSV) and lysine 29. Aspartate 143 serves as the catalytic Proton acceptor.

Belongs to the protein kinase superfamily. Ser/Thr protein kinase family.

It carries out the reaction L-seryl-[protein] + ATP = O-phospho-L-seryl-[protein] + ADP + H(+). It catalyses the reaction L-threonyl-[protein] + ATP = O-phospho-L-threonyl-[protein] + ADP + H(+). The chain is Serine/threonine-protein kinase mos (MOS) from Apteryx australis (Southern brown kiwi).